A 1961-amino-acid polypeptide reads, in one-letter code: Myosin-9 (1961 aa).

Ala2 carries the N-acetylalanine modification. Positions 2-838 (AQQAADKYLY…RLFTKVKPLL (837 aa)) are mediates interaction with LIMCH1. The residue at position 8 (Lys8) is an N6-acetyllysine. At Tyr11 the chain carries Phosphotyrosine. Residues 27–77 (GAKKLVWVPSTKNGFEPASLKEEVGEEAIVELVENGKKVKVNKDDIQKMNP) form the Myosin N-terminal SH3-like domain. The Myosin motor domain maps to 81–776 (SKVEDMAELT…VLAHLEEERD (696 aa)). Position 102 is an N6-acetyllysine (Lys102). Residue 174-181 (GESGAGKT) participates in ATP binding. An N6-acetyllysine mark is found at Lys299, Lys435, and Lys613. A Phosphoserine modification is found at Ser628. Residues 654–676 (LAKLMATLRNTNPNFVCCIIPNH) form an actin-binding region. Tyr754 is subject to Phosphotyrosine. The IQ domain occupies 779 to 808 (ITDVIIGFQACCRGYLARKAFAKRQQQLTA). Positions 841–1927 (IRHEDELLAK…LKNKLRRGDM (1087 aa)) form a coiled coil. Lys850 is modified (N6-succinyllysine). N6-acetyllysine is present on residues Lys860, Lys975, and Lys1024. Over residues 1035–1055 (RLRREEKQRQELEKTRRKLEG) the composition is skewed to basic and acidic residues. A disordered region spans residues 1035–1057 (RLRREEKQRQELEKTRRKLEGDS). Ser1114 is modified (phosphoserine). N6-acetyllysine occurs at positions 1234 and 1249. The disordered stretch occupies residues 1331–1353 (LKQMEDEKNSFREQLEEEEEEAK). Positions 1332–1344 (KQMEDEKNSFREQ) are enriched in basic and acidic residues. An N6-acetyllysine mark is found at Lys1358, Lys1393, Lys1405, Lys1411, Lys1460, and Lys1639. Position 1670 is an N6-succinyllysine (Lys1670). Phosphoserine is present on Ser1715. N6-acetyllysine is present on residues Lys1794, Lys1803, and Lys1846. The disordered stretch occupies residues 1878–1910 (RQLEEAEEEAQRANASRRKLQRELEDATETADA). Arg1924 carries the omega-N-methylarginine modification. The interval 1938–1961 (KGTGDCSDEEVDGKADGADAKATE) is disordered. Position 1944 is a phosphoserine (Ser1944). A compositionally biased stretch (basic and acidic residues) spans 1949 to 1961 (DGKADGADAKATE).

Belongs to the TRAFAC class myosin-kinesin ATPase superfamily. Myosin family. As to quaternary structure, myosin is a hexameric protein that consists of 2 heavy chain subunits (MHC), 2 alkali light chain subunits (MLC) and 2 regulatory light chain subunits (MLC-2). Interacts with RASIP1. Interacts with DDR1. Interacts with PDLIM2. Interacts with SVIL. Interacts with HTRA3. Interacts with Myo7a. Interacts with CFAP95. Interacts with LIMCH1; independently of the integration of MYH9 into the myosin complex. Interacts with RAB3A. Interacts with ZBED4. Interacts with S100A4; this interaction increases cell motility. Post-translationally, ISGylated. Ubiquitination.

The protein localises to the cytoplasm. Its subcellular location is the cytoskeleton. The protein resides in the cell cortex. It localises to the cytoplasmic vesicle. It is found in the secretory vesicle. The protein localises to the cortical granule. Functionally, cellular myosin that appears to play a role in cytokinesis, cell shape, and specialized functions such as secretion and capping. Required for cortical actin clearance prior to oocyte exocytosis. Promotes cell motility in conjunction with S100A4. During cell spreading, plays an important role in cytoskeleton reorganization, focal contact formation (in the margins but not the central part of spreading cells), and lamellipodial retraction; this function is mechanically antagonized by MYH10. The polypeptide is Myosin-9 (Myh9) (Rattus norvegicus (Rat)).